Reading from the N-terminus, the 380-residue chain is Beta sliding clamp (380 aa).

Belongs to the beta sliding clamp family. Forms a ring-shaped head-to-tail homodimer around DNA which binds and tethers DNA polymerases and other proteins to the DNA. The DNA replisome complex has a single clamp-loading complex (3 tau and 1 each of delta, delta', psi and chi subunits) which binds 3 Pol III cores (1 core on the leading strand and 2 on the lagging strand) each with a beta sliding clamp dimer. Additional proteins in the replisome are other copies of gamma, psi and chi, Ssb, DNA helicase and RNA primase.

Its subcellular location is the cytoplasm. Functionally, confers DNA tethering and processivity to DNA polymerases and other proteins. Acts as a clamp, forming a ring around DNA (a reaction catalyzed by the clamp-loading complex) which diffuses in an ATP-independent manner freely and bidirectionally along dsDNA. Initially characterized for its ability to contact the catalytic subunit of DNA polymerase III (Pol III), a complex, multichain enzyme responsible for most of the replicative synthesis in bacteria; Pol III exhibits 3'-5' exonuclease proofreading activity. The beta chain is required for initiation of replication as well as for processivity of DNA replication. In Halalkalibacterium halodurans (strain ATCC BAA-125 / DSM 18197 / FERM 7344 / JCM 9153 / C-125) (Bacillus halodurans), this protein is Beta sliding clamp (dnaN).